A 525-amino-acid chain; its full sequence is Ribonuclease III domain-containing protein RNC1, chloroplastic (525 aa).

A chloroplast-targeting transit peptide spans 1–28 (MGPPAMAFQALTLTPLPFSLHSSSRRVR). 2 consecutive RNase III domains span residues 125-271 (LLEA…LCFG) and 403-503 (EHPR…CVYG).

Interacts with RNA. Part of large ribonucleo-protein particles that contain CAF1 and/or CAF2.

The protein localises to the plastid. It localises to the chloroplast stroma. Functionally, binds specific group II introns in chloroplasts and facilitates their splicing. Acts on both subgroup IIA and subgroup IIB introns. The substrates of the subgroup II also require the CRM domain proteins CAF1 or CAF2. Binds both single-stranded and double-stranded RNA non-specifically, but lacks endonuclease activity. Required for plastid ribosome biogenesis. This Zea mays (Maize) protein is Ribonuclease III domain-containing protein RNC1, chloroplastic.